Here is a 361-residue protein sequence, read N- to C-terminus: Glutaminyl-peptide cyclotransferase (361 aa).

Positions Met1–Gly28 are cleaved as a signal peptide. N-linked (GlcNAc...) asparagine glycosylation occurs at Asn49. A disulfide bridge links Cys139 with Cys164. Zn(2+) is bound at residue Asp159. Glu201 (proton acceptor) is an active-site residue. Glu202 is a binding site for Zn(2+). Residue Asp248 is the Proton acceptor of the active site. Asn296 carries an N-linked (GlcNAc...) asparagine glycan. Position 330 (His330) interacts with Zn(2+).

Belongs to the glutaminyl-peptide cyclotransferase family.

It is found in the secreted. The catalysed reaction is N-terminal L-glutaminyl-[peptide] = N-terminal 5-oxo-L-prolyl-[peptide] + NH4(+). Functionally, responsible for the biosynthesis of pyroglutamyl peptides. Has a bias against acidic and tryptophan residues adjacent to the N-terminal glutaminyl residue and a lack of importance of chain length after the second residue. Also catalyzes N-terminal pyroglutamate formation. In vitro, catalyzes pyroglutamate formation of N-terminally truncated form of APP amyloid-beta peptides [Glu-3]-amyloid-beta. May be involved in the N-terminal pyroglutamate formation of several amyloid-related plaque-forming peptides. This chain is Glutaminyl-peptide cyclotransferase (QPCT), found in Homo sapiens (Human).